Consider the following 930-residue polypeptide: Isoleucine--tRNA ligase (930 aa).

The short motif at 57–67 (PYANGNIHVGH) is the 'HIGH' region element. Residue glutamate 554 participates in L-isoleucyl-5'-AMP binding. Residues 595-599 (KMSKS) carry the 'KMSKS' region motif. ATP is bound at residue lysine 598. Cysteine 888, cysteine 891, cysteine 908, and cysteine 911 together coordinate Zn(2+).

The protein belongs to the class-I aminoacyl-tRNA synthetase family. IleS type 1 subfamily. In terms of assembly, monomer. Requires Zn(2+) as cofactor.

It is found in the cytoplasm. The enzyme catalyses tRNA(Ile) + L-isoleucine + ATP = L-isoleucyl-tRNA(Ile) + AMP + diphosphate. In terms of biological role, catalyzes the attachment of isoleucine to tRNA(Ile). As IleRS can inadvertently accommodate and process structurally similar amino acids such as valine, to avoid such errors it has two additional distinct tRNA(Ile)-dependent editing activities. One activity is designated as 'pretransfer' editing and involves the hydrolysis of activated Val-AMP. The other activity is designated 'posttransfer' editing and involves deacylation of mischarged Val-tRNA(Ile). The polypeptide is Isoleucine--tRNA ligase (Streptococcus pneumoniae (strain CGSP14)).